Here is a 1260-residue protein sequence, read N- to C-terminus: Ankyrin repeat and sterile alpha motif domain-containing protein 1B (1260 aa).

ANK repeat units follow at residues 2-31, 58-87, 91-120, 127-156, 160-189, 193-222, and 225-254; these read GKDQ…GGIL, SGYT…STNV, KGYF…SHSR, ENET…DPTI, KLET…NLMS, RKHT…DVSC, and EKGS…DANI. The tract at residues 298 to 326 is disordered; sequence HAQEDTAQETRLSSPAQSPSQKTKSETVT. The segment covering 306–326 has biased composition (polar residues); that stretch reads ETRLSSPAQSPSQKTKSETVT. Phosphoserine occurs at positions 310, 311, 315, 354, and 365. 3 disordered regions span residues 368–402, 491–513, and 556–642; these read ELGK…SCGP, PGTG…PSPD, and GCTS…EASL. The span at 372–385 shows a compositional bias: polar residues; sequence NGSQSVRTSSTINL. Phosphothreonine is present on Thr-504. Ser-508 and Ser-511 each carry phosphoserine. Residues 556 to 575 are compositionally biased toward low complexity; it reads GCTSFTSSPPVSPPTSSVET. Over residues 576–588 the composition is skewed to basic and acidic residues; the sequence is TEIKNEGAEHTDD. Ser-739 is subject to Phosphoserine. The disordered stretch occupies residues 754 to 778; that stretch reads VNWSKSSTAERSSKDNSERTPSFTS. A Phosphothreonine modification is found at Thr-773. Ser-775 is modified (phosphoserine). 2 SAM domains span residues 810–876 and 884–949; these read CPVQ…LPKM and YHPT…RLHE. Tyr-901 bears the Phosphotyrosine mark. Residues 935–938 carry the Nuclear localization signal motif; the sequence is HRKR. The segment at 946-989 is disordered; the sequence is RLHEDPPQKPPRSITLREPSGNHTPPQLSPSLSQSTYTTGGSLD. Low complexity predominate over residues 969–984; that stretch reads TPPQLSPSLSQSTYTT. Ser-974 is modified (phosphoserine). A Phosphotyrosine modification is found at Tyr-1007. One can recognise a PID domain in the interval 1056 to 1213; sequence IFQSCDYKAF…SFENKPSKPI (158 aa). A disordered region spans residues 1197 to 1217; sequence HSSTLPESFENKPSKPIPKPR.

Interacts with EPHA8. Isoform 2 interacts with COIL. Isoform 3 interacts with DLG4. Nuclear translocation of isoform 3 requires an NMDAR-dependent proteolytic cleavage. A 35 kDa N-terminal form shuttles to the nucleus. In terms of tissue distribution, isoform 3 is brain specific and highly enriched in the postsynaptic densities (PSDs), especially in cortical, striatal and hippocampal PSDs.

The protein localises to the cytoplasm. It localises to the nucleus. Its subcellular location is the postsynaptic density. The protein resides in the cell projection. It is found in the dendritic spine. The protein localises to the cajal body. Isoform 2 may participate in the regulation of nucleoplasmic coilin protein interactions in neuronal and transformed cells. In terms of biological role, isoform 3 can regulate global protein synthesis by altering nucleolar numbers. This chain is Ankyrin repeat and sterile alpha motif domain-containing protein 1B (Anks1b), found in Rattus norvegicus (Rat).